A 309-amino-acid chain; its full sequence is Golgi to ER traffic protein 4 homolog (309 aa).

A disordered region spans residues 290–309 (SGGGLASMEVDGPTIEDEMD).

It belongs to the GET4 family.

Functionally, may play a role in insertion of tail-anchored proteins into the endoplasmic reticulum membrane. This is Golgi to ER traffic protein 4 homolog from Dictyostelium discoideum (Social amoeba).